Reading from the N-terminus, the 296-residue chain is Giardin subunit alpha-2 (296 aa).

4 Annexin repeats span residues 2-71, 73-143, 153-223, and 226-293; these read PKLS…MDLF, DRHE…MEKW, GSPD…AHFA, and GMHK…TLWR.

It belongs to the annexin family. Giardin subunit alpha subfamily.

The protein localises to the cytoplasm. The protein resides in the cytoskeleton. Functionally, giardins are involved in parasite attachment to the intestinal mucosa and in the cytoskeletal disassembly and reassembly that marks the transition from infectious trophozoite to transmissible cyst. They may interact with other cytoskeletal proteins such as microtubules in the microribbons or crossbridges, to maintain the integrity of the ventral disk. The polypeptide is Giardin subunit alpha-2 (Giardia intestinalis (Giardia lamblia)).